The chain runs to 387 residues: 1-deoxy-D-xylulose 5-phosphate reductoisomerase (387 aa).

Residues Thr-10, Gly-11, Ser-12, Val-13, Asn-38, and Asn-119 each coordinate NADPH. Residue Lys-120 coordinates 1-deoxy-D-xylulose 5-phosphate. Glu-121 lines the NADPH pocket. Asp-145 contacts Mn(2+). Ser-146, Glu-147, Ser-170, and His-193 together coordinate 1-deoxy-D-xylulose 5-phosphate. A Mn(2+)-binding site is contributed by Glu-147. Residue Gly-199 participates in NADPH binding. Ser-206, Asn-211, Lys-212, and Glu-215 together coordinate 1-deoxy-D-xylulose 5-phosphate. Residue Glu-215 participates in Mn(2+) binding.

Belongs to the DXR family. The cofactor is Mg(2+). It depends on Mn(2+) as a cofactor.

It carries out the reaction 2-C-methyl-D-erythritol 4-phosphate + NADP(+) = 1-deoxy-D-xylulose 5-phosphate + NADPH + H(+). The protein operates within isoprenoid biosynthesis; isopentenyl diphosphate biosynthesis via DXP pathway; isopentenyl diphosphate from 1-deoxy-D-xylulose 5-phosphate: step 1/6. Its function is as follows. Catalyzes the NADPH-dependent rearrangement and reduction of 1-deoxy-D-xylulose-5-phosphate (DXP) to 2-C-methyl-D-erythritol 4-phosphate (MEP). The chain is 1-deoxy-D-xylulose 5-phosphate reductoisomerase from Wolbachia pipientis wMel.